The following is a 308-amino-acid chain: MSTIDKEKFQFVKRDDFASETIDAPAYSYWKSVFKQFMKKKSTVVMLGILVAIILISFIYPMFSKFDFNDVSKVNDFSVRYIKPNAEHWFGTDSNGKSLFDGVWFGARNSILISVIATVINLVIGVFVGGIWGISKSVDRVMMEVYNVISNIPPLLIVIVLTYSIGAGFWNLIFAMSVTTWIGIAFMIRVQILRYRDLEYNLASRTLGTPTLKIVAKNIMPQLVSVIVTTMTQMLPSFISYEAFLSFFGLGLPITVPSLGRLISDYSQNVTTNAYLFWIPLTTLVLVSLSLFVVGQNLADASDPRTHR.

Helical transmembrane passes span 43-63 (TVVM…YPMF), 111-131 (ILIS…VGGI), 145-167 (VYNV…SIGA), 171-193 (NLIF…VQIL), 234-254 (MLPS…GLPI), and 274-294 (AYLF…LFVV). One can recognise an ABC transmembrane type-1 domain in the interval 107 to 295 (ARNSILISVI…LVSLSLFVVG (189 aa)).

It belongs to the binding-protein-dependent transport system permease family. OppBC subfamily.

Its subcellular location is the cell membrane. Its function is as follows. Part of the binding-protein-dependent transport system for oligopeptides; probably responsible for the translocation of the substrate across the membrane. The polypeptide is Oligopeptide transport system permease protein AmiD (amiD) (Streptococcus pneumoniae (strain ATCC BAA-255 / R6)).